Consider the following 316-residue polypeptide: Glucan endo-1,3-beta-glucosidase GV (316 aa).

The active-site Proton donor is Glu-99. Glu-239 serves as the catalytic Nucleophile.

Belongs to the glycosyl hydrolase 17 family.

The protein resides in the cytoplasm. It carries out the reaction Hydrolysis of (1-&gt;3)-beta-D-glucosidic linkages in (1-&gt;3)-beta-D-glucans.. Its function is as follows. May provide a degree of protection against microbial invasion of germinated barley grain through its ability to degrade fungal cell wall polysaccharides. The chain is Glucan endo-1,3-beta-glucosidase GV from Hordeum vulgare (Barley).